Here is a 95-residue protein sequence, read N- to C-terminus: Turripeptide OL184 (95 aa).

Contains 5 disulfide bonds. As to expression, expressed by the venom duct.

Its subcellular location is the secreted. Functionally, acts as a neurotoxin by inhibiting an ion channel. In Iotyrris olangoensis (Sea snail), this protein is Turripeptide OL184.